The primary structure comprises 376 residues: Succinyl-diaminopimelate desuccinylase (376 aa).

A Zn(2+)-binding site is contributed by H67. D69 is a catalytic residue. Position 100 (D100) interacts with Zn(2+). E134 functions as the Proton acceptor in the catalytic mechanism. Zn(2+)-binding residues include E135, E163, and H349.

It belongs to the peptidase M20A family. DapE subfamily. Homodimer. Zn(2+) is required as a cofactor. It depends on Co(2+) as a cofactor.

It carries out the reaction N-succinyl-(2S,6S)-2,6-diaminopimelate + H2O = (2S,6S)-2,6-diaminopimelate + succinate. The protein operates within amino-acid biosynthesis; L-lysine biosynthesis via DAP pathway; LL-2,6-diaminopimelate from (S)-tetrahydrodipicolinate (succinylase route): step 3/3. In terms of biological role, catalyzes the hydrolysis of N-succinyl-L,L-diaminopimelic acid (SDAP), forming succinate and LL-2,6-diaminopimelate (DAP), an intermediate involved in the bacterial biosynthesis of lysine and meso-diaminopimelic acid, an essential component of bacterial cell walls. The chain is Succinyl-diaminopimelate desuccinylase from Pseudoalteromonas translucida (strain TAC 125).